Reading from the N-terminus, the 287-residue chain is Acetylglutamate kinase (287 aa).

Substrate is bound by residues 70-71 (GG), arginine 92, and asparagine 184.

The protein belongs to the acetylglutamate kinase family. ArgB subfamily.

The protein localises to the cytoplasm. The enzyme catalyses N-acetyl-L-glutamate + ATP = N-acetyl-L-glutamyl 5-phosphate + ADP. Its pathway is amino-acid biosynthesis; L-arginine biosynthesis; N(2)-acetyl-L-ornithine from L-glutamate: step 2/4. Functionally, catalyzes the ATP-dependent phosphorylation of N-acetyl-L-glutamate. The chain is Acetylglutamate kinase from Ruegeria pomeroyi (strain ATCC 700808 / DSM 15171 / DSS-3) (Silicibacter pomeroyi).